The primary structure comprises 202 residues: Holliday junction branch migration complex subunit RuvA (202 aa).

The segment at methionine 1–alanine 65 is domain I. The tract at residues threonine 66–leucine 144 is domain II. A flexible linker region spans residues valine 145–arginine 155. Residues arginine 155–arginine 202 form a domain III region.

This sequence belongs to the RuvA family. In terms of assembly, homotetramer. Forms an RuvA(8)-RuvB(12)-Holliday junction (HJ) complex. HJ DNA is sandwiched between 2 RuvA tetramers; dsDNA enters through RuvA and exits via RuvB. An RuvB hexamer assembles on each DNA strand where it exits the tetramer. Each RuvB hexamer is contacted by two RuvA subunits (via domain III) on 2 adjacent RuvB subunits; this complex drives branch migration. In the full resolvosome a probable DNA-RuvA(4)-RuvB(12)-RuvC(2) complex forms which resolves the HJ.

It is found in the cytoplasm. Its function is as follows. The RuvA-RuvB-RuvC complex processes Holliday junction (HJ) DNA during genetic recombination and DNA repair, while the RuvA-RuvB complex plays an important role in the rescue of blocked DNA replication forks via replication fork reversal (RFR). RuvA specifically binds to HJ cruciform DNA, conferring on it an open structure. The RuvB hexamer acts as an ATP-dependent pump, pulling dsDNA into and through the RuvAB complex. HJ branch migration allows RuvC to scan DNA until it finds its consensus sequence, where it cleaves and resolves the cruciform DNA. In Nitratidesulfovibrio vulgaris (strain DP4) (Desulfovibrio vulgaris), this protein is Holliday junction branch migration complex subunit RuvA.